We begin with the raw amino-acid sequence, 491 residues long: Anthranilate synthase component 1 (491 aa).

Residues Ser49 and 271–273 (PYL) contribute to the L-tryptophan site. 306-307 (GT) lines the chorismate pocket. Glu333 is a binding site for Mg(2+). Residues Tyr421, Arg441, 455–457 (GAG), and Gly457 each bind chorismate. Glu470 lines the Mg(2+) pocket.

The protein belongs to the anthranilate synthase component I family. Heterotetramer consisting of two non-identical subunits: a beta subunit (TrpG) and a large alpha subunit (TrpE). Requires Mg(2+) as cofactor.

It carries out the reaction chorismate + L-glutamine = anthranilate + pyruvate + L-glutamate + H(+). It functions in the pathway amino-acid biosynthesis; L-tryptophan biosynthesis; L-tryptophan from chorismate: step 1/5. Its activity is regulated as follows. Feedback inhibited by tryptophan. In terms of biological role, part of a heterotetrameric complex that catalyzes the two-step biosynthesis of anthranilate, an intermediate in the biosynthesis of L-tryptophan. In the first step, the glutamine-binding beta subunit (TrpG) of anthranilate synthase (AS) provides the glutamine amidotransferase activity which generates ammonia as a substrate that, along with chorismate, is used in the second step, catalyzed by the large alpha subunit of AS (TrpE) to produce anthranilate. In the absence of TrpG, TrpE can synthesize anthranilate directly from chorismate and high concentrations of ammonia. In Neisseria meningitidis serogroup C / serotype 2a (strain ATCC 700532 / DSM 15464 / FAM18), this protein is Anthranilate synthase component 1 (trpE).